Reading from the N-terminus, the 75-residue chain is Metallothionein-like protein 1B (75 aa).

The protein belongs to the metallothionein superfamily. Type 15 family.

Its function is as follows. Metallothioneins have a high content of cysteine residues that bind various heavy metals. This is Metallothionein-like protein 1B (MT1B) from Vicia faba (Broad bean).